We begin with the raw amino-acid sequence, 510 residues long: Archaeal glutamate synthase [NADPH] (510 aa).

4Fe-4S ferredoxin-type domains follow at residues 10–37 (YKVE…YRRE) and 38–68 (GDRI…IKEN). Residues Cys-19, Cys-22, Cys-25, Cys-29, Cys-48, Cys-51, Cys-54, and Cys-58 each contribute to the [4Fe-4S] cluster site.

The protein belongs to the glutamate synthase family. It depends on FMN as a cofactor.

It carries out the reaction 2 L-glutamate + NADP(+) = L-glutamine + 2-oxoglutarate + NADPH + H(+). The protein is Archaeal glutamate synthase [NADPH] of Methanocaldococcus jannaschii (strain ATCC 43067 / DSM 2661 / JAL-1 / JCM 10045 / NBRC 100440) (Methanococcus jannaschii).